Here is a 667-residue protein sequence, read N- to C-terminus: WD40 repeat-containing protein DDB_G0271002 (667 aa).

2 WD repeats span residues 165-204 and 210-249; these read NHGV…PQET and KHKH…LLRI. Residues 278–293 show a composition bias toward low complexity; that stretch reads SSNSRDNNNNNSNSNN. Disordered regions lie at residues 278 to 301, 316 to 345, and 389 to 440; these read SSNS…GIII, LVEN…DNDD, and DIIF…ATTT. Acidic residues predominate over residues 325-345; the sequence is PMPEEEEEEEEEEVNQVDNDD. Low complexity predominate over residues 400–410; that stretch reads NQHQQQQQQNQ. Positions 411-428 are enriched in acidic residues; the sequence is EIEEEGQEGQEEQEDGTE. Positions 429 to 440 are enriched in low complexity; sequence NENNQGTIATTT.

The sequence is that of WD40 repeat-containing protein DDB_G0271002 from Dictyostelium discoideum (Social amoeba).